We begin with the raw amino-acid sequence, 1349 residues long: Indole-3-acetaldehyde oxidase (1349 aa).

A 2Fe-2S ferredoxin-type domain is found at 7-94 (AAVVLAVNGK…RCSVTTSEGI (88 aa)). Positions 46, 51, and 54 each coordinate [2Fe-2S] cluster. The FAD-binding PCMH-type domain occupies 237-415 (VPVSDDGWYR…LSIFIPEWGS (179 aa)).

The protein belongs to the xanthine dehydrogenase family. As to quaternary structure, aldehyde oxidases (AO) are homodimers and heterodimers of AO subunits. [2Fe-2S] cluster is required as a cofactor. It depends on FAD as a cofactor. Requires Mo-molybdopterin as cofactor. In terms of tissue distribution, mostly expressed in coleoptiles, and, to a lower extent, in mesocotyl and roots.

Its subcellular location is the cytoplasm. It carries out the reaction indole-3-acetaldehyde + O2 + H2O = (indol-3-yl)acetate + H2O2 + H(+). Functionally, in higher plants aldehyde oxidases (AO) appear to be homo- and heterodimeric assemblies of AO subunits with probably different physiological functions. Involved in the biosynthesis of auxin. The protein is Indole-3-acetaldehyde oxidase (AO2) of Zea mays (Maize).